A 262-amino-acid chain; its full sequence is 4-hydroxy-2-oxo-heptane-1,7-dioate aldolase (262 aa).

H45 (proton acceptor) is an active-site residue. Q147 contacts substrate. Residue E149 participates in a divalent metal cation binding. 2 residues coordinate substrate: A174 and D175. D175 is a binding site for a divalent metal cation.

This sequence belongs to the HpcH/HpaI aldolase family. In terms of assembly, homohexamer; trimer of dimers. A divalent metal cation serves as cofactor.

It catalyses the reaction 4-hydroxy-2-oxoheptanedioate = succinate semialdehyde + pyruvate. Its pathway is aromatic compound metabolism; 4-hydroxyphenylacetate degradation; pyruvate and succinate semialdehyde from 4-hydroxyphenylacetate: step 7/7. Catalyzes the reversible retro-aldol cleavage of 4-hydroxy-2-ketoheptane-1,7-dioate (HKHD) to pyruvate and succinic semialdehyde. The chain is 4-hydroxy-2-oxo-heptane-1,7-dioate aldolase from Shigella boydii serotype 4 (strain Sb227).